The sequence spans 168 residues: Thiol peroxidase (168 aa).

The region spanning 19–168 is the Thioredoxin domain; sequence PQAGSKAQTF…YEAALAVLKA (150 aa). C61 (cysteine sulfenic acid (-SOH) intermediate) is an active-site residue. An intrachain disulfide couples C61 to C95.

It belongs to the peroxiredoxin family. Tpx subfamily. In terms of assembly, homodimer.

The enzyme catalyses a hydroperoxide + [thioredoxin]-dithiol = an alcohol + [thioredoxin]-disulfide + H2O. Thiol-specific peroxidase that catalyzes the reduction of hydrogen peroxide and organic hydroperoxides to water and alcohols, respectively. Plays a role in cell protection against oxidative stress by detoxifying peroxides. This is Thiol peroxidase from Shigella dysenteriae.